Here is a 154-residue protein sequence, read N- to C-terminus: Isotocin-neurophysin IT 1 (154 aa).

The N-terminal stretch at 1–20 (MSGSMFSVFSLLYLLSVCSA) is a signal peptide. A disulfide bridge links C21 with C26. G29 bears the Glycine amide mark. 7 disulfide bridges follow: C42/C86, C45/C59, C53/C76, C60/C66, C93/C105, C99/C117, and C106/C111.

The protein belongs to the vasopressin/oxytocin family.

Its function is as follows. Isotocin causes contraction of smooth muscles. This Catostomus commersonii (White sucker) protein is Isotocin-neurophysin IT 1.